We begin with the raw amino-acid sequence, 120 residues long: Dihydroneopterin triphosphate 2'-epimerase (120 aa).

It belongs to the DHNA family. In terms of assembly, homooctamer.

The catalysed reaction is 7,8-dihydroneopterin 3'-triphosphate = 7,8-dihydromonapterin 3'-triphosphate. In terms of biological role, catalyzes the epimerization of carbon 2' of the side chain of 7,8-dihydroneopterin triphosphate (H2NTP) to form 7,8-dihydromonapterin triphosphate (H2MTP). Is required for tetrahydromonapterin biosynthesis. This Escherichia coli O157:H7 protein is Dihydroneopterin triphosphate 2'-epimerase (folX).